The chain runs to 220 residues: Adenylate kinase (220 aa).

10-15 is a binding site for ATP; sequence GAGKGT. The tract at residues 30–59 is NMP; that stretch reads STGDMLRAAVKAGTPLGLKAKEVMDGGNLV. AMP contacts are provided by residues Thr31, Arg36, 57 to 59, 85 to 88, and Gln92; these read NLV and GFPR. Positions 122-159 are LID; it reads GRRVHPASGRTYHIRFNPPQTAGMDDETGEPLVQRADD. Residues Arg123 and 132 to 133 each bind ATP; that span reads TY. 2 residues coordinate AMP: Arg156 and Arg167. Gly205 provides a ligand contact to ATP.

This sequence belongs to the adenylate kinase family. In terms of assembly, monomer.

The protein resides in the cytoplasm. It carries out the reaction AMP + ATP = 2 ADP. It functions in the pathway purine metabolism; AMP biosynthesis via salvage pathway; AMP from ADP: step 1/1. Functionally, catalyzes the reversible transfer of the terminal phosphate group between ATP and AMP. Plays an important role in cellular energy homeostasis and in adenine nucleotide metabolism. This Chlorobium luteolum (strain DSM 273 / BCRC 81028 / 2530) (Pelodictyon luteolum) protein is Adenylate kinase.